The sequence spans 583 residues: Pescadillo (583 aa).

Residues 275–329 adopt a coiled-coil conformation; it reads EKLSALSASLARMVASVEEEEAELDHFPTEGEDQEKMEVREKMEQQQSKQKKLFE. The BRCT domain maps to 323–416; sequence KQKKLFEGLK…IQLPVEEYFL (94 aa). Disordered stretches follow at residues 448–526 and 558–583; these read RGEK…EEKA and ANKL…KKKC. Acidic residues predominate over residues 455–489; that stretch reads EEDEEEEGEEEEDDEEDEEDDEQSEDEEEAEEEAN. Basic and acidic residues predominate over residues 512 to 526; sequence AKAENRARAAEEEKA.

This sequence belongs to the pescadillo family. Component of the PeBoW complex, composed of bop1, pes1 and wdr12. The complex is held together by bop1, which interacts with pes1 via its N-terminal domain and with wdr12 via a high-affinity interaction between the seven-bladed beta-propeller domains of the 2 proteins. The PeBoW complex associates with the 66S pre-ribosome.

The protein resides in the nucleus. Its subcellular location is the nucleolus. It is found in the nucleoplasm. Its function is as follows. Component of the PeBoW complex, which is required for maturation of 28S and 5.8S ribosomal RNAs and formation of the 60S ribosome. The sequence is that of Pescadillo (pes) from Danio rerio (Zebrafish).